The primary structure comprises 880 residues: Alanine--tRNA ligase (880 aa).

Residues His-568, His-572, Cys-670, and His-674 each coordinate Zn(2+).

It belongs to the class-II aminoacyl-tRNA synthetase family. Zn(2+) serves as cofactor.

Its subcellular location is the cytoplasm. The enzyme catalyses tRNA(Ala) + L-alanine + ATP = L-alanyl-tRNA(Ala) + AMP + diphosphate. Its function is as follows. Catalyzes the attachment of alanine to tRNA(Ala) in a two-step reaction: alanine is first activated by ATP to form Ala-AMP and then transferred to the acceptor end of tRNA(Ala). Also edits incorrectly charged Ser-tRNA(Ala) and Gly-tRNA(Ala) via its editing domain. The protein is Alanine--tRNA ligase of Ligilactobacillus salivarius (strain UCC118) (Lactobacillus salivarius).